We begin with the raw amino-acid sequence, 454 residues long: Alpha-1,3-mannosyl-glycoprotein 4-beta-N-acetylglucosaminyltransferase C (454 aa).

Residues 1–6 (MRCHLK) lie on the Cytoplasmic side of the membrane. The chain crosses the membrane as a helical; Signal-anchor for type II membrane protein span at residues 7–24 (KWVVVAAGLSILTSLYVY). The Lumenal portion of the chain corresponds to 25–454 (MQRAQSGNLK…VWTVKEDKTI (430 aa)). 2 N-linked (GlcNAc...) asparagine glycosylation sites follow: asparagine 58 and asparagine 189.

The protein belongs to the glycosyltransferase 54 family. A divalent metal cation serves as cofactor.

It is found in the golgi apparatus membrane. It carries out the reaction N(4)-{beta-D-GlcNAc-(1-&gt;2)-alpha-D-Man-(1-&gt;3)-[beta-D-GlcNAc-(1-&gt;2)-alpha-D-Man-(1-&gt;6)]-beta-D-Man-(1-&gt;4)-beta-D-GlcNAc-(1-&gt;4)-beta-D-GlcNAc}-L-asparaginyl-[protein] + UDP-N-acetyl-alpha-D-glucosamine = N(4)-{beta-D-GlcNAc-(1-&gt;2)-[beta-D-GlcNAc-(1-&gt;4)]-alpha-D-Man-(1-&gt;3)-[beta-D-GlcNAc-(1-&gt;2)-alpha-D-Man-(1-&gt;6)]-beta-D-Man-(1-&gt;4)-beta-D-GlcNAc-(1-&gt;4)-beta-D-GlcNAc}-L-asparaginyl-[protein] + UDP + H(+). Its pathway is protein modification; protein glycosylation. Glycosyltransferase that participates in the transfer of N-acetylglucosamine (GlcNAc) to the core mannose residues of N-linked glycans. Catalyzes the formation of the GlcNAcbeta1-4 branch on the GlcNAcbeta1-2Manalpha1-3 arm of the core structure of N-linked glycans. This Danio rerio (Zebrafish) protein is Alpha-1,3-mannosyl-glycoprotein 4-beta-N-acetylglucosaminyltransferase C (mgat4c).